The sequence spans 217 residues: ATP-dependent Clp protease proteolytic subunit 2 (217 aa).

S121 serves as the catalytic Nucleophile. H146 is a catalytic residue.

This sequence belongs to the peptidase S14 family. In terms of assembly, fourteen ClpP subunits assemble into 2 heptameric rings which stack back to back to give a disk-like structure with a central cavity, resembling the structure of eukaryotic proteasomes.

The protein resides in the cytoplasm. It carries out the reaction Hydrolysis of proteins to small peptides in the presence of ATP and magnesium. alpha-casein is the usual test substrate. In the absence of ATP, only oligopeptides shorter than five residues are hydrolyzed (such as succinyl-Leu-Tyr-|-NHMec, and Leu-Tyr-Leu-|-Tyr-Trp, in which cleavage of the -Tyr-|-Leu- and -Tyr-|-Trp bonds also occurs).. Its function is as follows. Cleaves peptides in various proteins in a process that requires ATP hydrolysis. Has a chymotrypsin-like activity. Plays a major role in the degradation of misfolded proteins. The sequence is that of ATP-dependent Clp protease proteolytic subunit 2 from Paraburkholderia xenovorans (strain LB400).